A 101-amino-acid chain; its full sequence is NADH-quinone oxidoreductase subunit K (101 aa).

The next 3 helical transmembrane spans lie at 4–24 (LGHL…GIFL), 30–50 (IVLL…FIAF), and 62–82 (FVFF…AILV).

This sequence belongs to the complex I subunit 4L family. In terms of assembly, NDH-1 is composed of 14 different subunits. Subunits NuoA, H, J, K, L, M, N constitute the membrane sector of the complex.

It is found in the cell inner membrane. It carries out the reaction a quinone + NADH + 5 H(+)(in) = a quinol + NAD(+) + 4 H(+)(out). Its function is as follows. NDH-1 shuttles electrons from NADH, via FMN and iron-sulfur (Fe-S) centers, to quinones in the respiratory chain. The immediate electron acceptor for the enzyme in this species is believed to be ubiquinone. Couples the redox reaction to proton translocation (for every two electrons transferred, four hydrogen ions are translocated across the cytoplasmic membrane), and thus conserves the redox energy in a proton gradient. In Xylella fastidiosa (strain Temecula1 / ATCC 700964), this protein is NADH-quinone oxidoreductase subunit K.